The sequence spans 197 residues: C-type lectin domain family 3 member A (197 aa).

The first 24 residues, 1-24, serve as a signal peptide directing secretion; that stretch reads MAKNGLVIYILVITLLLDQTSCHA. Disulfide bonds link cysteine 68–cysteine 78, cysteine 95–cysteine 191, and cysteine 167–cysteine 183. The region spanning 74–192 is the C-type lectin domain; the sequence is FHKKCYLAAE…CHSSKRYICE (119 aa).

The protein localises to the secreted. In terms of biological role, promotes cell adhesion to laminin and fibronectin. The chain is C-type lectin domain family 3 member A (CLEC3A) from Bos taurus (Bovine).